Consider the following 759-residue polypeptide: Phosphoribosylformylglycinamidine synthase subunit PurL (759 aa).

Histidine 61 is a catalytic residue. 2 residues coordinate ATP: tyrosine 64 and lysine 105. Glutamate 107 contacts Mg(2+). Residues 108–111 (SHNH) and arginine 130 contribute to the substrate site. Residue histidine 109 is the Proton acceptor of the active site. Mg(2+) is bound at residue aspartate 131. Residue glutamine 260 participates in substrate binding. Position 288 (aspartate 288) interacts with Mg(2+). Residue 332 to 334 (ESQ) coordinates substrate. Residues aspartate 520 and glycine 557 each contribute to the ATP site. Residue asparagine 558 coordinates Mg(2+). Serine 560 is a binding site for substrate.

It belongs to the FGAMS family. Monomer. Part of the FGAM synthase complex composed of 1 PurL, 1 PurQ and 2 PurS subunits.

The protein localises to the cytoplasm. It carries out the reaction N(2)-formyl-N(1)-(5-phospho-beta-D-ribosyl)glycinamide + L-glutamine + ATP + H2O = 2-formamido-N(1)-(5-O-phospho-beta-D-ribosyl)acetamidine + L-glutamate + ADP + phosphate + H(+). The protein operates within purine metabolism; IMP biosynthesis via de novo pathway; 5-amino-1-(5-phospho-D-ribosyl)imidazole from N(2)-formyl-N(1)-(5-phospho-D-ribosyl)glycinamide: step 1/2. Functionally, part of the phosphoribosylformylglycinamidine synthase complex involved in the purines biosynthetic pathway. Catalyzes the ATP-dependent conversion of formylglycinamide ribonucleotide (FGAR) and glutamine to yield formylglycinamidine ribonucleotide (FGAM) and glutamate. The FGAM synthase complex is composed of three subunits. PurQ produces an ammonia molecule by converting glutamine to glutamate. PurL transfers the ammonia molecule to FGAR to form FGAM in an ATP-dependent manner. PurS interacts with PurQ and PurL and is thought to assist in the transfer of the ammonia molecule from PurQ to PurL. This is Phosphoribosylformylglycinamidine synthase subunit PurL from Thermoplasma acidophilum (strain ATCC 25905 / DSM 1728 / JCM 9062 / NBRC 15155 / AMRC-C165).